Reading from the N-terminus, the 400-residue chain is Lysophospholipid transporter LplT (400 aa).

12 helical membrane passes run 19–39 (VIVA…ATLA), 53–73 (VLQM…GQIA), 91–111 (AGAA…LVGI), 139–159 (MMEA…GVLA), 164–184 (IAAL…NLFI), 195–213 (SWRL…VVLW), 227–247 (LFWG…PVAL), 257–277 (YLNA…AKLV), 281–301 (TVSR…IFSL), 304–324 (ALLP…FFVV), 352–372 (NSAM…GVPA), and 373–393 (VAIG…LWIW).

It belongs to the major facilitator superfamily. LplT (TC 2.A.1.42) family.

It is found in the cell inner membrane. In terms of biological role, catalyzes the facilitated diffusion of 2-acyl-glycero-3-phosphoethanolamine (2-acyl-GPE) into the cell. In Salmonella paratyphi B (strain ATCC BAA-1250 / SPB7), this protein is Lysophospholipid transporter LplT.